Here is a 101-residue protein sequence, read N- to C-terminus: U-scoloptoxin(10)-Sm2a (101 aa).

An N-terminal signal peptide occupies residues 1–23 (MNKSMIILCAVLFLTYIIEENEA).

This sequence belongs to the scoloptoxin-10 family. Contains 3 disulfide bonds. As to expression, expressed by the venom gland.

It is found in the secreted. The polypeptide is U-scoloptoxin(10)-Sm2a (Scolopendra morsitans (Tanzanian blue ringleg centipede)).